The following is a 1126-amino-acid chain: MNADAQSTDASLSMREPLSHASIQEMLRRVVEKQAADDTTAIGKVFSEAGRAYAQDALPSDKGEVLKISFSLDATQQNILRANFPGRRTVFSNSSSSSHCFAAAHRLLETDFVYRCFGNTVDSIIDLGGNFVSHMKVKRHNVHCCCPILDARDGARLTERILSLKSYVRKHPEIVGEADYCMDTFQKCSRRADYAFAIHSTSDLDVGELACSLDQKGVMKFICTMMVDADMLIHNEGEIPNFNVRWEIDRKKDLIHFDFIDEPNLGYSHRFSLLKHYLTYNAVDLGHAAYRIERKQDFGGVMVIDLTYSLGFVPKMPHSNGRSCAWYNRVKGQMVVHTVNEGYYHHSYQTAVRRKVLVDKKVLTRVTEVAFRQFRPNADAHSAIQSIATMLSSSTNHTIIGGVTLISGKPLSPDDYIPVATTIYYRVKKLYNAIPEMLSLLDKGERLSTDAVLKGSEGPMWYSGPTFLSALDKVNVPGDFVAKALLSLPKRDLKSLFSRSATSHSERTPVRDESPIRCTDGVFYPIRMLLKCLGSDKFESVTITDPRSNTETTVDLYQSFQKKIETVFSFILGKIDGPSPLISDPVYFQSLEDVYYAEWHQGNAIDASNYARTLLDDIRKQKEESLKAKAKEVEDAQKLNRAILQVHAYLEAHPDGGKIEGLGLSSQFIAKIPELAIPTPKPLPEFEKNAETGEILRINPHSDAILEAIDYLKSTSANSIITLNKLGDHCQWTTKGLDVVWAGDDKRRAFIPKKNTWVGPTARSYPLAKYERAMSKDGYVTLRWDGEVLDANCVRSLSQYEIVFVDQSCVFASAEAIIPSLEKALGLEAHFSVTIVDGVAGCGKTTNIKQIARSSGRDVDLILTSNRSSADELKETIDCSPLTKLHYIRTCDSYLMSASAVKAQRLIFDECFLQHAGLVYAAATLAGCSEVIGFGDTEQIPFVSRNPSFVFRHHKLTGKVERKLITWRSPADATYCLEKYFYKNKKPVKTNSRVLRSIEVVPINSPVSVERNTNALYLCHTQAEKAVLKAQTHLKGCDNIFTTHEAQGKTFDNVYFCRLTRTSTSLATGRDPINGPCNGLVALSRHKKTFKYFTIAHDSDDVIYNACRDAGNTDDSILARSYNHNF.

Residues 69–406 form a methyltransferase region; it reads SFSLDATQQN…HTIIGGVTLI (338 aa). Residues 90 to 278 form the Alphavirus-like MT domain; sequence VFSNSSSSSH…HRFSLLKHYL (189 aa). Residues 806-963 enclose the (+)RNA virus helicase ATP-binding domain; sequence DQSCVFASAE…HKLTGKVERK (158 aa). The ATP-dependent helicase stretch occupies residues 834–1094; the sequence is TIVDGVAGCG…RHKKTFKYFT (261 aa). Residue 838-845 participates in ATP binding; the sequence is GVAGCGKT. Residues 964 to 1125 form the (+)RNA virus helicase C-terminal domain; the sequence is LITWRSPADA…SILARSYNHN (162 aa).

It belongs to the bromoviridae replication protein 1a family. In terms of assembly, interacts with RNA-directed RNA polymerase 2a.

Its subcellular location is the host endoplasmic reticulum membrane. In terms of biological role, involved in the virus replication. Contains a helicase domain and a methyltransferase domain. The methyltransferase domain is probably involved in viral RNA capping. Involved in the formation of ER membrane spherular invaginations in which RNA replication complexes form. The protein is Replication protein 1a of Alfalfa mosaic virus (AMV).